Here is a 544-residue protein sequence, read N- to C-terminus: Chaperonin GroEL (544 aa).

ATP contacts are provided by residues 30 to 33 (TLGP), Lys51, 87 to 91 (DGTTT), Gly415, 479 to 481 (NAA), and Asp495.

This sequence belongs to the chaperonin (HSP60) family. Forms a cylinder of 14 subunits composed of two heptameric rings stacked back-to-back. Interacts with the co-chaperonin GroES.

It localises to the cytoplasm. The enzyme catalyses ATP + H2O + a folded polypeptide = ADP + phosphate + an unfolded polypeptide.. Its function is as follows. Together with its co-chaperonin GroES, plays an essential role in assisting protein folding. The GroEL-GroES system forms a nano-cage that allows encapsulation of the non-native substrate proteins and provides a physical environment optimized to promote and accelerate protein folding. The chain is Chaperonin GroEL from Francisella tularensis subsp. holarctica (strain FTNF002-00 / FTA).